A 261-amino-acid polypeptide reads, in one-letter code: MICOS complex subunit Mic25 (261 aa).

Glycine 2 carries N-myristoyl glycine lipidation. Serine 13, serine 31, and serine 33 each carry phosphoserine. Disordered stretches follow at residues 39–59 (KDCS…PECS), 81–114 (CGPA…VKED), and 140–165 (TEKH…RLTR). A coiled-coil region spans residues 109–202 (SAVKEDLKKF…AELYKLSSQQ (94 aa)). Positions 154–165 (THEQQQSDRLTR) are enriched in basic and acidic residues. In terms of domain architecture, CHCH spans 220–261 (EPVCSGLQAQILRCYRDHLHEVLLCSDLAKAYQHCVSTARKG). Short sequence motifs (cx9C motif) lie at residues 223 to 233 (CSGLQAQILRC) and 244 to 254 (CSDLAKAYQHC). 2 disulfide bridges follow: cysteine 223–cysteine 254 and cysteine 233–cysteine 244.

It belongs to the MICOS complex subunit Mic19 family. Metazoan Mic25 subfamily. As to quaternary structure, component of the mitochondrial contact site and cristae organizing system (MICOS) complex, composed of at least MICOS10/MIC10, CHCHD3/MIC19, CHCHD6/MIC25, APOOL/MIC27, IMMT/MIC60, APOO/MIC23/MIC26 and MICOS13/MIC13. This complex was also known under the names MINOS or MitOS complex. The MICOS complex associates with mitochondrial outer membrane proteins SAMM50, MTX1 and MTX2 (together described as components of the mitochondrial outer membrane sorting assembly machinery (SAM) complex) and DNAJC11, mitochondrial inner membrane protein TMEM11 and with HSPA9. The MICOS and SAM complexes together with DNAJC11 are part of a large protein complex spanning both membranes termed the mitochondrial intermembrane space bridging (MIB) complex. Interacts with DISC1. Interacts with IMMT/MIC60.

It localises to the mitochondrion inner membrane. The protein resides in the mitochondrion. Functionally, component of the MICOS complex, a large protein complex of the mitochondrial inner membrane that plays crucial roles in the maintenance of crista junctions, inner membrane architecture, and formation of contact sites to the outer membrane. In Rattus norvegicus (Rat), this protein is MICOS complex subunit Mic25 (Chchd6).